Reading from the N-terminus, the 1025-residue chain is Multidrug resistance protein MdtC (1025 aa).

12 helical membrane passes run 3-23 (FFAL…AITL), 333-353 (EVEQ…FLFL), 360-380 (IIPA…MYLC), 387-407 (LSLM…IVVL), 431-451 (VGFT…PLLL), 463-483 (FAVT…TLTP), 528-548 (LVGV…ISIP), 853-873 (VILI…LYES), 875-895 (VHPL…LLAL), 897-917 (LFNA…IGIV), 953-973 (PIMM…LSGG), and 984-1004 (ITIV…TPVV).

Belongs to the resistance-nodulation-cell division (RND) (TC 2.A.6) family. MdtC subfamily. As to quaternary structure, part of a tripartite efflux system composed of MdtA, MdtB and MdtC. MdtC forms a heteromultimer with MdtB.

It is found in the cell inner membrane. The chain is Multidrug resistance protein MdtC from Shigella sonnei (strain Ss046).